The following is a 230-amino-acid chain: Ribose-5-phosphate isomerase A (230 aa).

Substrate contacts are provided by residues 31 to 34, 88 to 91, and 101 to 104; these read TGST, DGSD, and KGGG. Glu-110 functions as the Proton acceptor in the catalytic mechanism. Lys-128 lines the substrate pocket.

Belongs to the ribose 5-phosphate isomerase family. Homodimer.

The catalysed reaction is aldehydo-D-ribose 5-phosphate = D-ribulose 5-phosphate. It participates in carbohydrate degradation; pentose phosphate pathway; D-ribose 5-phosphate from D-ribulose 5-phosphate (non-oxidative stage): step 1/1. Functionally, catalyzes the reversible conversion of ribose-5-phosphate to ribulose 5-phosphate. This chain is Ribose-5-phosphate isomerase A, found in Lactobacillus helveticus (strain DPC 4571).